Consider the following 229-residue polypeptide: Trehalose-6-phosphate phosphatase-related protein (229 aa).

The active-site Nucleophile is the aspartate 5. Mg(2+)-binding residues include aspartate 5, aspartate 7, and aspartate 177. A substrate-binding site is contributed by 5–7 (DYD).

The protein belongs to the trehalose phosphatase family. Requires Mg(2+) as cofactor.

It carries out the reaction alpha,alpha-trehalose 6-phosphate + H2O = alpha,alpha-trehalose + phosphate. The protein operates within glycan biosynthesis; trehalose biosynthesis. In terms of biological role, removes the phosphate from trehalose 6-phosphate (Tre6P) to produce free trehalose. Also catalyzes the dephosphorylation of para-nitrophenyl phosphate (pNPP), but with lesser efficiency (in vitro). This chain is Trehalose-6-phosphate phosphatase-related protein, found in Thermoplasma acidophilum (strain ATCC 25905 / DSM 1728 / JCM 9062 / NBRC 15155 / AMRC-C165).